The primary structure comprises 373 residues: Malate dehydrogenase, mitochondrial (373 aa).

NAD(+)-binding positions include 69-75 and Asp-95; that span reads GAAGGIG. Substrate-binding residues include Arg-141 and Arg-147. Residues Asn-154 and 177–179 contribute to the NAD(+) site; that span reads ISN. Residues Asn-179 and Arg-213 each contribute to the substrate site. His-237 functions as the Proton acceptor in the catalytic mechanism. Met-288 contributes to the NAD(+) binding site.

This sequence belongs to the LDH/MDH superfamily. MDH type 1 family. In terms of assembly, homodimer.

It localises to the mitochondrion matrix. It carries out the reaction (S)-malate + NAD(+) = oxaloacetate + NADH + H(+). The polypeptide is Malate dehydrogenase, mitochondrial (Chlamydomonas reinhardtii (Chlamydomonas smithii)).